A 156-amino-acid polypeptide reads, in one-letter code: Ribosomal RNA large subunit methyltransferase H (156 aa).

Residues L73, G104, and 123 to 128 (VSSLTL) each bind S-adenosyl-L-methionine.

It belongs to the RNA methyltransferase RlmH family. In terms of assembly, homodimer.

The protein resides in the cytoplasm. It carries out the reaction pseudouridine(1915) in 23S rRNA + S-adenosyl-L-methionine = N(3)-methylpseudouridine(1915) in 23S rRNA + S-adenosyl-L-homocysteine + H(+). Functionally, specifically methylates the pseudouridine at position 1915 (m3Psi1915) in 23S rRNA. The protein is Ribosomal RNA large subunit methyltransferase H of Paraburkholderia xenovorans (strain LB400).